The following is a 540-amino-acid chain: Probable protein kinase UbiB (540 aa).

Residues 24–44 (LLFDQPLLPWWLASLRLLMPW) form a helical membrane-spanning segment. A Protein kinase domain is found at 126–494 (RFDVEPLASA…RRRQGDRWAL (369 aa)). ATP-binding positions include 132-140 (LASASVAQV) and K154. D289 (proton acceptor) is an active-site residue. The next 2 helical transmembrane spans lie at 496–516 (LLGAGLLGGGAVLAAGAAETA) and 518–538 (LAAPAAWPAWLMLAAGLYLIV).

Belongs to the ABC1 family. UbiB subfamily.

Its subcellular location is the cell inner membrane. It functions in the pathway cofactor biosynthesis; ubiquinone biosynthesis [regulation]. Is probably a protein kinase regulator of UbiI activity which is involved in aerobic coenzyme Q (ubiquinone) biosynthesis. In Pseudomonas putida (strain ATCC 700007 / DSM 6899 / JCM 31910 / BCRC 17059 / LMG 24140 / F1), this protein is Probable protein kinase UbiB.